The primary structure comprises 299 residues: Glycine--tRNA ligase alpha subunit (299 aa).

This sequence belongs to the class-II aminoacyl-tRNA synthetase family. As to quaternary structure, tetramer of two alpha and two beta subunits.

The protein localises to the cytoplasm. It carries out the reaction tRNA(Gly) + glycine + ATP = glycyl-tRNA(Gly) + AMP + diphosphate. The polypeptide is Glycine--tRNA ligase alpha subunit (glyQ) (Synechocystis sp. (strain ATCC 27184 / PCC 6803 / Kazusa)).